The chain runs to 83 residues: RNA-binding protein Hfq (83 aa).

Residues 9–69 enclose the Sm domain; that stretch reads DYFLNQLRKD…ISTFAPARNV (61 aa).

Belongs to the Hfq family. In terms of assembly, homohexamer.

Functionally, RNA chaperone that binds small regulatory RNA (sRNAs) and mRNAs to facilitate mRNA translational regulation in response to envelope stress, environmental stress and changes in metabolite concentrations. Also binds with high specificity to tRNAs. The polypeptide is RNA-binding protein Hfq (Exiguobacterium sibiricum (strain DSM 17290 / CCUG 55495 / CIP 109462 / JCM 13490 / 255-15)).